The primary structure comprises 303 residues: Ribosomal protein L11 methyltransferase (303 aa).

4 residues coordinate S-adenosyl-L-methionine: threonine 144, glycine 165, aspartate 187, and asparagine 235.

The protein belongs to the methyltransferase superfamily. PrmA family.

It localises to the cytoplasm. It carries out the reaction L-lysyl-[protein] + 3 S-adenosyl-L-methionine = N(6),N(6),N(6)-trimethyl-L-lysyl-[protein] + 3 S-adenosyl-L-homocysteine + 3 H(+). Methylates ribosomal protein L11. This chain is Ribosomal protein L11 methyltransferase, found in Prochlorococcus marinus (strain MIT 9301).